The following is a 185-amino-acid chain: Ribosome-recycling factor (185 aa).

Belongs to the RRF family.

Its subcellular location is the cytoplasm. In terms of biological role, responsible for the release of ribosomes from messenger RNA at the termination of protein biosynthesis. May increase the efficiency of translation by recycling ribosomes from one round of translation to another. In Parafrankia sp. (strain EAN1pec), this protein is Ribosome-recycling factor.